The chain runs to 288 residues: MQIVEKAPAKINLGLDTLFEHPNGDKEWDMVMTSVDLADYVMLESLHTNRIEVVTDSGFLPNDRRNLAFQAVSVLKRYCHVDRGVRIKIRKAIPVAAGLGGGSSDAAAVLRGLNRMWNLHLDLATLARLGLQVDSDVPYCVYSQTAHVTGKGDVVTPLPKLPPMWIILAKPKVSVSTPNILRQVNYERIDQHPNIEALLAGIQQQDFAEIFANMGNVLEPITAKRYPEILQIKRQLLTFGADAAQMSGTGPTVFGVCRKQSRAQRVYNSLKGFCREVYLVRPVNLNEH.

Lys10 is an active-site residue. Position 94–104 (94–104) interacts with ATP; that stretch reads PVAAGLGGGSS. The active site involves Asp136.

Belongs to the GHMP kinase family. IspE subfamily.

It catalyses the reaction 4-CDP-2-C-methyl-D-erythritol + ATP = 4-CDP-2-C-methyl-D-erythritol 2-phosphate + ADP + H(+). Its pathway is isoprenoid biosynthesis; isopentenyl diphosphate biosynthesis via DXP pathway; isopentenyl diphosphate from 1-deoxy-D-xylulose 5-phosphate: step 3/6. Functionally, catalyzes the phosphorylation of the position 2 hydroxy group of 4-diphosphocytidyl-2C-methyl-D-erythritol. In Lactiplantibacillus plantarum (strain ATCC BAA-793 / NCIMB 8826 / WCFS1) (Lactobacillus plantarum), this protein is 4-diphosphocytidyl-2-C-methyl-D-erythritol kinase.